The primary structure comprises 68 residues: Beta-toxin Cl13 (68 aa).

The 66-residue stretch at 1–66 (KEGYLVDYHT…VWPLPNKRCK (66 aa)) folds into the LCN-type CS-alpha/beta domain. 4 disulfides stabilise this stretch: C12-C65, C16-C41, C25-C46, and C29-C48. The residue at position 66 (K66) is a Lysine amide.

The protein belongs to the long (4 C-C) scorpion toxin superfamily. Sodium channel inhibitor family. Beta subfamily. Expressed by the venom gland.

It localises to the secreted. Its function is as follows. Beta toxins bind voltage-independently at site-4 of sodium channels (Nav) and shift the voltage of activation toward more negative potentials thereby affecting sodium channel activation and promoting spontaneous and repetitive firing. Inhibits sodium channels Nav1.4/SCN4A, Nav1.5/SCN5A and Nav1.6/SCN8A. Also has a weak inhibitory effect on Nav1.2/SCN2A. Is lethal to mice. The sequence is that of Beta-toxin Cl13 from Centruroides limpidus (Mexican scorpion).